We begin with the raw amino-acid sequence, 754 residues long: Disintegrin and metalloproteinase domain-containing protein 32 (754 aa).

A signal peptide spans 1–22 (MLGAMLHTLLLLLLAELGALLA). Serine 23 bears the Phosphoserine mark. The propeptide occupies 23 to 176 (SGPESQSSFL…TNYGILINKK (154 aa)). Residue asparagine 126 is glycosylated (N-linked (GlcNAc...) asparagine). Over 177–689 (PKSPFKNLFP…ERASKNQEKK (513 aa)) the chain is Extracellular. A Peptidase M12B domain is found at 187-384 (LYLEMSIVVD…EGAKCLQNKP (198 aa)). 4 disulfide bridges follow: cysteine 296/cysteine 379, cysteine 338/cysteine 363, cysteine 340/cysteine 345, and cysteine 454/cysteine 475. Residues asparagine 362, asparagine 469, asparagine 570, and asparagine 571 are each glycosylated (N-linked (GlcNAc...) asparagine). Residues 391-483 (AAVCGNGKVE…NCPPDVTINN (93 aa)) form the Disintegrin domain. Residues 628-660 (QSKTCSSKCHGNGVCNSHGVCHCNAGYSPPNCQ) form the EGF-like domain. 3 disulfides stabilise this stretch: cysteine 632-cysteine 642, cysteine 636-cysteine 648, and cysteine 650-cysteine 659. A helical membrane pass occupies residues 690–710 (WLLSLYIVLIILASVFLIGTG). Topologically, residues 711–754 (WKGLKQCGSKEEESMSSESKSEDSTYTYVSRSTSETSSMTSTSS) are cytoplasmic. Over residues 720-733 (KEEESMSSESKSED) the composition is skewed to basic and acidic residues. A disordered region spans residues 720 to 754 (KEEESMSSESKSEDSTYTYVSRSTSETSSMTSTSS). The segment covering 734-754 (STYTYVSRSTSETSSMTSTSS) has biased composition (low complexity).

In terms of tissue distribution, expressed in sperm (at protein level). Highly expressed in the testis and weakly expressed in the epididymis, brain and heart.

Its subcellular location is the membrane. Its function is as follows. May play a role in sperm development and fertilization This is a non-catalytic metalloprotease-like protein. The sequence is that of Disintegrin and metalloproteinase domain-containing protein 32 from Mus musculus (Mouse).